The following is a 152-amino-acid chain: Arginine repressor (152 aa).

It belongs to the ArgR family.

Its subcellular location is the cytoplasm. Its pathway is amino-acid biosynthesis; L-arginine biosynthesis [regulation]. Functionally, regulates arginine biosynthesis genes. The chain is Arginine repressor from Thermotoga sp. (strain RQ2).